A 601-amino-acid polypeptide reads, in one-letter code: Arginine--tRNA ligase (601 aa).

The 'HIGH' region signature appears at 133 to 143; sequence PNTNKPLHLGH.

It belongs to the class-I aminoacyl-tRNA synthetase family. Monomer.

The protein localises to the cytoplasm. It carries out the reaction tRNA(Arg) + L-arginine + ATP = L-arginyl-tRNA(Arg) + AMP + diphosphate. This chain is Arginine--tRNA ligase, found in Flavobacterium psychrophilum (strain ATCC 49511 / DSM 21280 / CIP 103535 / JIP02/86).